Consider the following 113-residue polypeptide: uncharacterized protein (113 aa).

Residues M1–F14 constitute a mitochondrion transit peptide. Positions Q41–D79 are disordered. Low complexity predominate over residues S55–G73.

Its subcellular location is the mitochondrion. This is an uncharacterized protein from Arabidopsis thaliana (Mouse-ear cress).